The primary structure comprises 635 residues: Interferon-induced GTP-binding protein Mx2 (635 aa).

In terms of domain architecture, Dynamin-type G spans 31-304 (DLALPAIAVI…LVQHIEKSMP (274 aa)). The interval 41–48 (GDQSSGKS) is G1 motif. 41-48 (GDQSSGKS) contributes to the GTP binding site. Residues 66–68 (VTR) are G2 motif. Residues 142–145 (DLPG) form a G3 motif region. GTP contacts are provided by residues 142 to 146 (DLPGI) and 211 to 214 (TKPD). Residues 211 to 214 (TKPD) are G4 motif. Residues 243 to 246 (KCRG) form a G5 motif region. One can recognise a GED domain in the interval 549 to 635 (LREMMLHLKS…MKAHNYLVEF (87 aa)).

The protein belongs to the TRAFAC class dynamin-like GTPase superfamily. Dynamin/Fzo/YdjA family.

Its subcellular location is the nucleus. It localises to the cytoplasm. Does not inhibit strain RB-1 of the fish pathogen, infectious hematopoietic necrosis virus (IHNV). The protein is Interferon-induced GTP-binding protein Mx2 of Oncorhynchus mykiss (Rainbow trout).